The chain runs to 131 residues: Proline-rich protein 3 (131 aa).

Positions 1 to 77 (LHRGPPGSRG…KEQRNPRRLK (77 aa)) are disordered. A compositionally biased stretch (pro residues) spans 12 to 25 (MIPPLLSLPPPPRG). A compositionally biased stretch (gly residues) spans 28–44 (PLRGGLGPRSGPYGRGW). The segment at 98 to 126 (KSDRPVCRHFAKKGHCRYEDLCAFYHPGA) adopts a C3H1-type zinc-finger fold.

This is Proline-rich protein 3 (PRR3) from Sus scrofa (Pig).